Consider the following 354-residue polypeptide: MTLLKNDTFLRALLKQPVEYTPIWMMRQAGRYLPEYKATRAKAGSFLDLCKNTGLATEVTIQPLERFDLDAAILFSDILTVPDAMGLGLYFAEGEGPKFAHALQHESDIAKLHVPDMEKLQYVFDAVTSIRKALDGRVPLIGFSGSPFTLACYMVEGGGSKEFRTIKTMMYSRPDLLYKILDTNAQAVTAYLNAQIDAGAQAVQIFDTWGGVLSDAAFKEFSLKYIRQIVAGLKRESEGRRVPVIVFAKGGGLWLESMVQIGADALGLDWTCNIGEARRRVGNQVALQGNFDPSALFGTPESIRTEVARILTGYGHGSGHVFNLGHGINQHADPEHAKILVDTVHELSRQYHGG.

Substrate contacts are provided by residues 27–31 (RQAGR), D77, Y153, T208, and H326.

It belongs to the uroporphyrinogen decarboxylase family. As to quaternary structure, homodimer.

The protein localises to the cytoplasm. The enzyme catalyses uroporphyrinogen III + 4 H(+) = coproporphyrinogen III + 4 CO2. It participates in porphyrin-containing compound metabolism; protoporphyrin-IX biosynthesis; coproporphyrinogen-III from 5-aminolevulinate: step 4/4. In terms of biological role, catalyzes the decarboxylation of four acetate groups of uroporphyrinogen-III to yield coproporphyrinogen-III. In Neisseria gonorrhoeae (strain NCCP11945), this protein is Uroporphyrinogen decarboxylase.